The following is a 402-amino-acid chain: Argininosuccinate synthase (402 aa).

7 to 15 contributes to the ATP binding site; the sequence is LYSGGLDTS. Position 83 (Y83) interacts with L-citrulline. G113 serves as a coordination point for ATP. 3 residues coordinate L-aspartate: T115, N119, and D120. An L-citrulline-binding site is contributed by N119. L-citrulline contacts are provided by R123, S169, S178, E253, and Y265.

This sequence belongs to the argininosuccinate synthase family. Type 1 subfamily. As to quaternary structure, homotetramer.

It is found in the cytoplasm. The catalysed reaction is L-citrulline + L-aspartate + ATP = 2-(N(omega)-L-arginino)succinate + AMP + diphosphate + H(+). Its pathway is amino-acid biosynthesis; L-arginine biosynthesis; L-arginine from L-ornithine and carbamoyl phosphate: step 2/3. This is Argininosuccinate synthase from Thermoplasma acidophilum (strain ATCC 25905 / DSM 1728 / JCM 9062 / NBRC 15155 / AMRC-C165).